A 351-amino-acid polypeptide reads, in one-letter code: Molybdate-binding protein MolA (351 aa).

A signal peptide spans 1-21; that stretch reads MKLKSLLIACLLSSLSFSALA. In terms of domain architecture, Fe/B12 periplasmic-binding spans 41-322; the sequence is RAVVLQHQTL…WLAKALYPQR (282 aa). Molybdate contacts are provided by residues 47–48, Tyr-217, Arg-264, and 300–301; these read HQ and GY.

This sequence belongs to the bacterial solute-binding protein 8 family. As to quaternary structure, the complex is composed of two ATP-binding proteins (MolC), two transmembrane proteins (MolB) and a solute-binding protein (MolA).

The protein resides in the periplasm. Its activity is regulated as follows. The MolBCA complex shows a decrease in affinity in the presence of increasing concentrations of substrate and nucleotide. In terms of biological role, part of the ABC transporter complex MolBCA involved in molybdate import. Functions as a low-affinity molybdate transporter. Binds to both molybdate and tungstate, but not to sulfate or phosphate. In Haemophilus influenzae (strain ATCC 51907 / DSM 11121 / KW20 / Rd), this protein is Molybdate-binding protein MolA.